Reading from the N-terminus, the 320-residue chain is Cytochrome f (320 aa).

Positions 1-35 are cleaved as a signal peptide; that stretch reads MQTRNTFFWIKEQMTRSISVSIIVYVITQTSISNA. Positions 36, 56, 59, and 60 each coordinate heme. The chain crosses the membrane as a helical span at residues 286–306; the sequence is VQGLLFFFASVILAQIFLVLK.

It belongs to the cytochrome f family. As to quaternary structure, the 4 large subunits of the cytochrome b6-f complex are cytochrome b6, subunit IV (17 kDa polypeptide, petD), cytochrome f and the Rieske protein, while the 4 small subunits are PetG, PetL, PetM and PetN. The complex functions as a dimer. It depends on heme as a cofactor.

It is found in the plastid. Its subcellular location is the chloroplast thylakoid membrane. In terms of biological role, component of the cytochrome b6-f complex, which mediates electron transfer between photosystem II (PSII) and photosystem I (PSI), cyclic electron flow around PSI, and state transitions. The chain is Cytochrome f from Buxus microphylla (Littleleaf boxwood).